Here is a 66-residue protein sequence, read N- to C-terminus: Large ribosomal subunit protein bL32 (66 aa).

Residues 1–20 (MAVPKRRKSKSKVRTKRAHH) are disordered.

The protein belongs to the bacterial ribosomal protein bL32 family.

This is Large ribosomal subunit protein bL32 from Leptospira borgpetersenii serovar Hardjo-bovis (strain JB197).